The following is a 230-amino-acid chain: Urease accessory protein UreG (230 aa).

The tract at residues 1 to 31 (MPPHFLSADSTGQPHRHADRPKRVRTPGEPL) is disordered. The span at 14-25 (PHRHADRPKRVR) shows a compositional bias: basic residues. Residue 37–44 (GPVGSGKT) coordinates GTP.

Belongs to the SIMIBI class G3E GTPase family. UreG subfamily. As to quaternary structure, homodimer. UreD, UreF and UreG form a complex that acts as a GTP-hydrolysis-dependent molecular chaperone, activating the urease apoprotein by helping to assemble the nickel containing metallocenter of UreC. The UreE protein probably delivers the nickel.

It is found in the cytoplasm. Functionally, facilitates the functional incorporation of the urease nickel metallocenter. This process requires GTP hydrolysis, probably effectuated by UreG. The protein is Urease accessory protein UreG of Mycobacterium sp. (strain JLS).